A 461-amino-acid chain; its full sequence is E3 ubiquitin-protein ligase parkin (461 aa).

The region spanning Val-30 to Phe-90 is the Ubiquitin-like domain. Ser-92 bears the Phosphoserine mark. The RING-type 0; atypical zinc finger occupies Ala-145 to Pro-227. Zn(2+) contacts are provided by Cys-151, Cys-155, Cys-167, and Cys-170. Thr-176 is subject to Phosphothreonine. Residues Cys-197, Cys-202, Cys-213, His-216, Cys-240, Cys-243, Cys-255, His-259, Cys-262, Cys-265, Cys-291, Cys-295, Cys-334, Cys-339, Cys-354, Cys-356, Cys-361, Cys-364, His-369, Cys-373, Cys-415, and Cys-418 each coordinate Zn(2+). Residues Lys-236–Gly-461 are TRIAD supradomain. An RING-type 1 zinc finger spans residues Cys-240–Cys-295. 2 IBR-type zinc fingers span residues Glu-315–Cys-373 and Leu-411–Arg-452. The segment at Cys-415 to Cys-446 adopts an RING-type 2; atypical zinc-finger fold. The active site involves Cys-428. Residues Cys-433, Cys-438, Cys-443, Cys-446, Cys-454, and His-458 each coordinate Zn(2+).

Belongs to the RBR family. Parkin subfamily. As to quaternary structure, forms an E3 ubiquitin ligase complex with E2 ubiquitin-conjugating enzymes. Auto-ubiquitinates in an E2-dependent manner leading to its own degradation. Post-translationally, phosphorylated. Activation requires phosphorylation at Ser-92 by Pink1 and binding to Pink1-phosphorylated polyubiquitin chains. Phosphorylation at Thr-176 by Pink1 is also important for mitochondrial localization.

It is found in the mitochondrion. The protein resides in the cytoplasm. Its subcellular location is the cytosol. The catalysed reaction is [E2 ubiquitin-conjugating enzyme]-S-ubiquitinyl-L-cysteine + [acceptor protein]-L-lysine = [E2 ubiquitin-conjugating enzyme]-L-cysteine + [acceptor protein]-N(6)-ubiquitinyl-L-lysine.. Its pathway is protein modification; protein ubiquitination. In the autoinhibited state the side chain of Phe-460 inserts into a hydrophobic groove in RING-0, occluding the ubiquitin acceptor site Cys-428, whereas the REP repressor element binds RING-1 and blocks its E2-binding site. Activation of park requires 2 steps: (1) phosphorylation at Ser-92 by Pink1 and (2) binding to phosphorylated ubiquitin, leading to unlock repression of the catalytic Cys-428 by the RING-0 region via an allosteric mechanism and converting park to its fully-active form. According to another report, phosphorylation at Ser-92 by Pink1 is not essential for activation and only binding to phosphorylated ubiquitin is essential to unlock repression. Functionally, E3 ubiquitin-protein ligase which accepts ubiquitin from E2 ubiquitin-conjugating enzymes in the form of a thioester and then directly transfers the ubiquitin to targeted substrates, such as Marf, Opa1, Sep1, Tom20 and porin. Mediates monoubiquitination as well as 'Lys-6', 'Lys-11', 'Lys-48'-linked and 'Lys-63'-linked polyubiquitination of substrates, depending on the context. Protects against mitochondrial dysfunction during cellular stress, by acting downstream of Pink1, to coordinate mitochondrial quality control mechanisms that remove and replace dysfunctional mitochondrial components. Depending on the severity of mitochondrial damage and/or dysfunction, activity ranges from preventing apoptosis and stimulating mitochondrial biogenesis to regulating mitochondrial dynamics and eliminating severely damaged mitochondria via mitophagy. Appears to be particularly important in maintaining the physiology and function of cells with high energy demands that are undergoing stress or altered metabolic environment, including spermatids, muscle cells and neurons such as the dopaminergic (DA) neurons. Activation and recruitment onto the outer membrane of damaged/dysfunctional mitochondria (OMM) requires Pink1-mediated phosphorylation of both park and ubiquitin. In depolarized mitochondria, mediates the decision between mitophagy or preventing apoptosis by inducing either the poly- or monoubiquitination of porin/VDAC; polyubiquitination of porin promotes mitophagy, while monoubiquitination of porin decreases mitochondrial calcium influx which ultimately inhibits apoptosis. When cellular stress results in irreversible mitochondrial damage, promotes the autophagic degradation of dysfunctional depolarized mitochondria (mitophagy) by promoting the ubiquitination of mitochondrial proteins. Preferentially assembles 'Lys-6'-, 'Lys-11'- and 'Lys-63'-linked polyubiquitin chains following mitochondrial damage, leading to mitophagy. In developing tissues, inhibits JNK-mediated apoptosis by negatively regulating bsk transcription. The Pink1-park pathway also promotes fission and/or inhibits fusion of damaged mitochondria by mediating the ubiquitination and subsequent degradation of proteins involved in mitochondrial fusion/fission such as Marf and Opa1. This prevents the refusion of unhealthy mitochondria with the healthy mitochondrial network and/or initiates mitochondrial fragmentation facilitating their later engulfment by autophagosomes. Regulates motility of damaged mitochondria by phosphorylating Miro which likely promotes its park-dependent degradation by the proteasome; in motor neurons, this inhibits mitochondrial intracellular anterograde transport along the axons which probably increases the chance of the mitochondria being eliminated in the soma. The Pink1-park pathway is also involved in mitochondrial regeneration processes such as promoting mitochondrial biogenesis, activating localized mitochondrial repair, promoting selective turnover of mitochondrial proteins and initiating the mitochondrial import of endogenous proteins. Involved in mitochondrial biogenesis via the ubiquitination of transcriptional repressor Paris which leads to its subsequent proteasomal degradation and allows activation of the transcription factor srl. Promotes localized mitochondrial repair by activating the translation of specific nuclear-encoded mitochondrial RNAs (nc-mtRNAs) on the mitochondrial surface, including several key electron transport chain component nc-mtRNAs. The chain is E3 ubiquitin-protein ligase parkin from Pediculus humanus subsp. corporis (Body louse).